The chain runs to 132 residues: Profilin-1 (132 aa).

Belongs to the profilin family. Occurs in many kinds of cells as a complex with monomeric actin in a 1:1 ratio. In terms of tissue distribution, expressed in the nerve ring during late embryonic stages. In adults, expression is seen in the neurons, vulva and somatic gonad.

It localises to the cytoplasm. The protein localises to the cytoskeleton. Binds to actin and affects the structure of the cytoskeleton. At high concentrations, profilin prevents the polymerization of actin, whereas it enhances it at low concentrations. By binding to PIP2, it inhibits the formation of IP3 and DG. Also binds to poly(L-proline) and phosphatidylinositol 4,5-bisphosphate micelles. The sequence is that of Profilin-1 (pfn-1) from Caenorhabditis elegans.